Consider the following 221-residue polypeptide: Ependymin-1 (221 aa).

An N-terminal signal peptide occupies residues 1 to 21 (MQAFAVAALSIWLCLGATTLA). N-linked (GlcNAc...) asparagine glycosylation is found at Asn-33, Asn-73, and Asn-97.

The protein belongs to the ependymin family. In terms of processing, binds calcium through the terminal sialic acids. As to expression, EPDs are synthesized in the meninx and secreted in the cerebrospinal fluid.

Its subcellular location is the secreted. In terms of biological role, may play a role in neural plasticity. May be involved during axon regeneration. This is Ependymin-1 (epd1) from Oncorhynchus mykiss (Rainbow trout).